The sequence spans 394 residues: Dual-specificity RNA methyltransferase RlmN (394 aa).

The Proton acceptor role is filled by Glu-92. The Radical SAM core domain maps to 98 to 341; the sequence is ENDRGTLCIS…TTVRRTRGDD (244 aa). A disulfide bond links Cys-105 and Cys-346. Residues Cys-112, Cys-116, and Cys-119 each contribute to the [4Fe-4S] cluster site. S-adenosyl-L-methionine-binding positions include 166 to 167, Ser-198, 220 to 222, and Asn-303; these read GE and SLH. Cys-346 (S-methylcysteine intermediate) is an active-site residue. A disordered region spans residues 374–394; the sequence is DSAVQRRADAAPSGSATETTR.

It belongs to the radical SAM superfamily. RlmN family. Requires [4Fe-4S] cluster as cofactor.

It localises to the cytoplasm. The enzyme catalyses adenosine(2503) in 23S rRNA + 2 reduced [2Fe-2S]-[ferredoxin] + 2 S-adenosyl-L-methionine = 2-methyladenosine(2503) in 23S rRNA + 5'-deoxyadenosine + L-methionine + 2 oxidized [2Fe-2S]-[ferredoxin] + S-adenosyl-L-homocysteine. It carries out the reaction adenosine(37) in tRNA + 2 reduced [2Fe-2S]-[ferredoxin] + 2 S-adenosyl-L-methionine = 2-methyladenosine(37) in tRNA + 5'-deoxyadenosine + L-methionine + 2 oxidized [2Fe-2S]-[ferredoxin] + S-adenosyl-L-homocysteine. Functionally, specifically methylates position 2 of adenine 2503 in 23S rRNA and position 2 of adenine 37 in tRNAs. m2A2503 modification seems to play a crucial role in the proofreading step occurring at the peptidyl transferase center and thus would serve to optimize ribosomal fidelity. This chain is Dual-specificity RNA methyltransferase RlmN, found in Methylibium petroleiphilum (strain ATCC BAA-1232 / LMG 22953 / PM1).